An 834-amino-acid chain; its full sequence is DNA-directed RNA polymerase subunit beta' (834 aa).

Residues 1–22 (MTYSNKPTGSSLRSSRNSTLEP) are compositionally biased toward polar residues. The tract at residues 1-45 (MTYSNKPTGSSLRSSRNSTLEPQSLVHREESKRQEGPKGQNLRIG) is disordered. A compositionally biased stretch (basic and acidic residues) spans 26–36 (VHREESKRQEG). Cysteine 101, cysteine 103, cysteine 118, and cysteine 121 together coordinate Zn(2+). Aspartate 606, aspartate 608, and aspartate 610 together coordinate Mg(2+).

It belongs to the RNA polymerase beta' chain family. RpoC1 subfamily. In plastids the minimal PEP RNA polymerase catalytic core is composed of four subunits: alpha, beta, beta', and beta''. When a (nuclear-encoded) sigma factor is associated with the core the holoenzyme is formed, which can initiate transcription. Mg(2+) serves as cofactor. Requires Zn(2+) as cofactor.

The protein localises to the plastid. The protein resides in the chloroplast. It carries out the reaction RNA(n) + a ribonucleoside 5'-triphosphate = RNA(n+1) + diphosphate. DNA-dependent RNA polymerase catalyzes the transcription of DNA into RNA using the four ribonucleoside triphosphates as substrates. The chain is DNA-directed RNA polymerase subunit beta' from Staurastrum punctulatum (Green alga).